Reading from the N-terminus, the 283-residue chain is MFIKLDGTKLSQKLKEDLAKKVNNQKIKILIIISDPSEASRIYVRNKINYCDSLGIQTEVYDLSKIDDTNQFIVEMNQKISLSNPNGVLVQLPIKERLDTNKIIENIPIRLDVDAFLYHRFDQDQKEKVIPCVLNAVLELFKEYQLSFLDKKILLIGNGITSNQPIVNYLNEHQIKFDLITKENSQLLEEKTKVADLVISAVGKAKFLANYQFKRGVIFIDIGIDKYFDPEQSKYLICGDFDYDKLKEIASYGTPTPGGIGPLTIYSLVKNLINLSEIQKVNK.

NADP(+) is bound by residues 157–159 (GNG) and I224.

This sequence belongs to the tetrahydrofolate dehydrogenase/cyclohydrolase family. As to quaternary structure, homodimer.

It catalyses the reaction (6R)-5,10-methylene-5,6,7,8-tetrahydrofolate + NADP(+) = (6R)-5,10-methenyltetrahydrofolate + NADPH. The catalysed reaction is (6R)-5,10-methenyltetrahydrofolate + H2O = (6R)-10-formyltetrahydrofolate + H(+). Its pathway is one-carbon metabolism; tetrahydrofolate interconversion. Catalyzes the oxidation of 5,10-methylenetetrahydrofolate to 5,10-methenyltetrahydrofolate and then the hydrolysis of 5,10-methenyltetrahydrofolate to 10-formyltetrahydrofolate. The chain is Bifunctional protein FolD from Mycoplasmoides gallisepticum (strain R(low / passage 15 / clone 2)) (Mycoplasma gallisepticum).